Reading from the N-terminus, the 698-residue chain is Serotransferrin (698 aa).

Positions 1–19 (MRFAVGALLACAALGLCLA) are cleaved as a signal peptide. Transferrin-like domains are found at residues 25–347 (VKWC…NQRE) and 360–683 (VKWC…NIRK). 2 disulfides stabilise this stretch: C28-C67 and C38-C58. R42 is modified (dimethylated arginine). D82 and Y114 together coordinate Fe(3+). 8 disulfide bridges follow: C137/C213, C156/C350, C177/C193, C180/C196, C190/C198, C246/C260, C363/C395, and C373/C386. Residues T139, R143, A145, and G146 each contribute to the hydrogencarbonate site. Y207 provides a ligand contact to Fe(3+). Fe(3+) is bound at residue H268. S388 bears the Phosphoserine mark. Fe(3+)-binding residues include D410 and Y447. 8 disulfides stabilise this stretch: C420/C693, C435/C656, C471/C542, C495/C684, C505/C519, C516/C525, C582/C596, and C634/C639. The hydrogencarbonate site is built by T473, R477, A479, and G480. Residue N512 is glycosylated (N-linked (GlcNAc...) asparagine). Y536 contributes to the Fe(3+) binding site. Residue H604 coordinates Fe(3+). At S685 the chain carries Phosphoserine.

It belongs to the transferrin family. Monomer. Part of a complex composed of SLC40A1/ferroportin, TF/transferrin and HEPH/hephaestin that transfers iron from cells to transferrin. As to expression, expressed by the liver and secreted in plasma.

The protein resides in the secreted. Transferrins are iron binding transport proteins which can bind two Fe(3+) ions in association with the binding of an anion, usually bicarbonate. It is responsible for the transport of iron from sites of absorption and heme degradation to those of storage and utilization. Serum transferrin may also have a further role in stimulating cell proliferation. The protein is Serotransferrin (Tf) of Rattus norvegicus (Rat).